Here is a 456-residue protein sequence, read N- to C-terminus: RUN domain-containing protein 3B (456 aa).

Positions 1-26 (MASRSLGGLSGIRGGGGGGGKKSLSS) are disordered. Residues 8–21 (GLSGIRGGGGGGGK) show a composition bias toward gly residues. R13 carries the post-translational modification Omega-N-methylarginine. The RUN domain maps to 57 to 189 (DDSSPEFNNF…IDFSFCLKGE (133 aa)). A phosphoserine mark is found at S215 and S216. Residues 300–325 (AHKLEKEQLEYIIVELQDQLTVLKNN) are a coiled coil. A disordered region spans residues 382 to 405 (SLSQTSLDPGQSQEGDGKQDTLNI).

Belongs to the RUNDC3 family. Interacts with RAP2A.

The chain is RUN domain-containing protein 3B (RUNDC3B) from Macaca fascicularis (Crab-eating macaque).